A 331-amino-acid polypeptide reads, in one-letter code: Putative peptidyl-prolyl cis-trans isomerase RF_0616 (331 aa).

A disordered region spans residues 28-50 (NPTTIEQTASNNSSTDENQTSIN). Residues 128–226 (GHVVTVFYQI…NNEVKIYDDE (99 aa)) enclose the PPIase FKBP-type domain.

The catalysed reaction is [protein]-peptidylproline (omega=180) = [protein]-peptidylproline (omega=0). The polypeptide is Putative peptidyl-prolyl cis-trans isomerase RF_0616 (Rickettsia felis (strain ATCC VR-1525 / URRWXCal2) (Rickettsia azadi)).